A 148-amino-acid chain; its full sequence is Calmodulin-4 (148 aa).

4 consecutive EF-hand domains span residues 8–43, 44–79, 80–115, and 116–148; these read EEVA…LGKN, LPEK…YKKG, HRAG…LGES, and LSQE…HVEN. Residues aspartate 21, asparagine 23, aspartate 25, histidine 27, glutamate 32, aspartate 57, aspartate 59, aspartate 61, lysine 63, glutamate 68, aspartate 93, asparagine 95, aspartate 97, tyrosine 99, and glutamate 104 each contribute to the Ca(2+) site.

In terms of biological role, implicated in the early stage of ectopic ossification. The chain is Calmodulin-4 (Calm4) from Mus musculus (Mouse).